Reading from the N-terminus, the 317-residue chain is Cytochrome f (317 aa).

The N-terminal stretch at Met1–Ala34 is a signal peptide. Heme-binding residues include Tyr35, Cys55, Cys58, and His59. A helical membrane pass occupies residues Ile284–Lys304.

This sequence belongs to the cytochrome f family. The 4 large subunits of the cytochrome b6-f complex are cytochrome b6, subunit IV (17 kDa polypeptide, PetD), cytochrome f and the Rieske protein, while the 4 small subunits are PetG, PetL, PetM and PetN. The complex functions as a dimer. It depends on heme as a cofactor.

It is found in the cellular thylakoid membrane. In terms of biological role, component of the cytochrome b6-f complex, which mediates electron transfer between photosystem II (PSII) and photosystem I (PSI), cyclic electron flow around PSI, and state transitions. The protein is Cytochrome f of Prochlorococcus marinus (strain MIT 9515).